Reading from the N-terminus, the 366-residue chain is Geranylgeranyl pyrophosphate synthase, chloroplastic/chromoplastic (366 aa).

Residues 44–65 are disordered; it reads KRTVSSSSSSSLITKEDNNLKS. Residues K112, R115, and H144 each contribute to the isopentenyl diphosphate site. Mg(2+)-binding residues include D151 and D157. R162 is a binding site for dimethylallyl diphosphate. Isopentenyl diphosphate is bound at residue R163. Positions 251, 252, 289, 306, and 316 each coordinate dimethylallyl diphosphate.

Belongs to the FPP/GGPP synthase family. In terms of assembly, dimer. Mg(2+) is required as a cofactor.

Its subcellular location is the plastid. It is found in the chloroplast stroma. The protein localises to the chromoplast. It carries out the reaction isopentenyl diphosphate + dimethylallyl diphosphate = (2E)-geranyl diphosphate + diphosphate. The enzyme catalyses isopentenyl diphosphate + (2E)-geranyl diphosphate = (2E,6E)-farnesyl diphosphate + diphosphate. It catalyses the reaction isopentenyl diphosphate + (2E,6E)-farnesyl diphosphate = (2E,6E,10E)-geranylgeranyl diphosphate + diphosphate. The protein operates within isoprenoid biosynthesis; farnesyl diphosphate biosynthesis; farnesyl diphosphate from geranyl diphosphate and isopentenyl diphosphate: step 1/1. It participates in isoprenoid biosynthesis; geranyl diphosphate biosynthesis; geranyl diphosphate from dimethylallyl diphosphate and isopentenyl diphosphate: step 1/1. Its pathway is isoprenoid biosynthesis; geranylgeranyl diphosphate biosynthesis; geranylgeranyl diphosphate from farnesyl diphosphate and isopentenyl diphosphate: step 1/1. Catalyzes the trans-addition of the three molecules of IPP onto DMAPP to form geranylgeranyl pyrophosphate. The polypeptide is Geranylgeranyl pyrophosphate synthase, chloroplastic/chromoplastic (GGPS1) (Sinapis alba (White mustard)).